A 148-amino-acid polypeptide reads, in one-letter code: Auxin-responsive protein SAUR65 (148 aa).

This sequence belongs to the ARG7 family.

The protein localises to the cell membrane. May promote auxin-stimulated organ elongation, such as hypocotyls, stamen filaments and petals. The protein is Auxin-responsive protein SAUR65 of Arabidopsis thaliana (Mouse-ear cress).